A 515-amino-acid chain; its full sequence is 2-isopropylmalate synthase (515 aa).

The 263-residue stretch at 4–266 (INIFDTTLRD…ETRLNLQEIK (263 aa)) folds into the Pyruvate carboxyltransferase domain. Mn(2+)-binding residues include Asp-13, His-201, His-203, and Asn-237. The regulatory domain stretch occupies residues 391 to 515 (QLSSLQVQYG…RAENQKVAMQ (125 aa)).

The protein belongs to the alpha-IPM synthase/homocitrate synthase family. LeuA type 1 subfamily. As to quaternary structure, homodimer. The cofactor is Mn(2+).

The protein localises to the cytoplasm. The enzyme catalyses 3-methyl-2-oxobutanoate + acetyl-CoA + H2O = (2S)-2-isopropylmalate + CoA + H(+). It functions in the pathway amino-acid biosynthesis; L-leucine biosynthesis; L-leucine from 3-methyl-2-oxobutanoate: step 1/4. Catalyzes the condensation of the acetyl group of acetyl-CoA with 3-methyl-2-oxobutanoate (2-ketoisovalerate) to form 3-carboxy-3-hydroxy-4-methylpentanoate (2-isopropylmalate). This chain is 2-isopropylmalate synthase, found in Geobacillus sp. (strain WCH70).